The sequence spans 432 residues: Adenylosuccinate synthetase 1 (432 aa).

GTP contacts are provided by residues 12–18 and 40–42; these read GDEGKGR and GHT. Aspartate 13 (proton acceptor) is an active-site residue. The Mg(2+) site is built by aspartate 13 and glycine 40. Residues 13–16, 38–41, threonine 128, arginine 142, glutamine 222, threonine 237, and arginine 301 contribute to the IMP site; these read DEGK and NAGH. Histidine 41 acts as the Proton donor in catalysis. A substrate-binding site is contributed by 297 to 303; that stretch reads TNTGRPR. Residues arginine 303, 329 to 331, and 411 to 413 contribute to the GTP site; these read KLD and STG.

This sequence belongs to the adenylosuccinate synthetase family. In terms of assembly, homodimer. Requires Mg(2+) as cofactor.

Its subcellular location is the cytoplasm. The enzyme catalyses IMP + L-aspartate + GTP = N(6)-(1,2-dicarboxyethyl)-AMP + GDP + phosphate + 2 H(+). It functions in the pathway purine metabolism; AMP biosynthesis via de novo pathway; AMP from IMP: step 1/2. Its function is as follows. Plays an important role in the de novo pathway of purine nucleotide biosynthesis. Catalyzes the first committed step in the biosynthesis of AMP from IMP. The protein is Adenylosuccinate synthetase 1 of Chromobacterium violaceum (strain ATCC 12472 / DSM 30191 / JCM 1249 / CCUG 213 / NBRC 12614 / NCIMB 9131 / NCTC 9757 / MK).